We begin with the raw amino-acid sequence, 576 residues long: NADH-ubiquinone oxidoreductase chain 5 (576 aa).

16 consecutive transmembrane segments (helical) span residues 6–26 (ISFY…LKFL), 46–66 (IVMT…VLLI), 88–108 (ILLV…PNLI), 109–129 (SILL…IYFQ), 149–169 (VALL…YIFY), 179–199 (MMII…QIPF), 211–231 (TPVS…YLLI), 240–260 (WWMG…AGLG), 270–289 (IIAL…LSMG), 294–316 (AFFH…GSII), 339–359 (CSCF…AGFY), 363–383 (LILE…LFFF), 423–443 (IFFL…LMFL), 459–479 (LFVC…SLFF), 492–512 (FAGS…NYPL), and 556–576 (IYLL…VLVN).

This sequence belongs to the complex I subunit 5 family.

The protein localises to the mitochondrion inner membrane. The enzyme catalyses a ubiquinone + NADH + 5 H(+)(in) = a ubiquinol + NAD(+) + 4 H(+)(out). Its function is as follows. Core subunit of the mitochondrial membrane respiratory chain NADH dehydrogenase (Complex I) that is believed to belong to the minimal assembly required for catalysis. Complex I functions in the transfer of electrons from NADH to the respiratory chain. The immediate electron acceptor for the enzyme is believed to be ubiquinone. The polypeptide is NADH-ubiquinone oxidoreductase chain 5 (ND5) (Anopheles quadrimaculatus (Common malaria mosquito)).